Here is a 214-residue protein sequence, read N- to C-terminus: Adenylate kinase (214 aa).

ATP is bound at residue 10 to 15 (GSGKGT). Positions 30-59 (STGDMLRAAVREGTPLGMEAKKIMDAGQLV) are NMP. AMP-binding positions include Thr31, Arg36, 57 to 59 (QLV), 85 to 88 (GFPR), and Gln92. The segment at 122-159 (GRRVHPASGRTYHVVFNPPKVEGRDDETGEPLVQREDD) is LID. ATP is bound by residues Arg123 and 132–133 (TY). 2 residues coordinate AMP: Arg156 and Arg167. Gly200 is an ATP binding site.

It belongs to the adenylate kinase family. In terms of assembly, monomer.

It localises to the cytoplasm. It carries out the reaction AMP + ATP = 2 ADP. It participates in purine metabolism; AMP biosynthesis via salvage pathway; AMP from ADP: step 1/1. Catalyzes the reversible transfer of the terminal phosphate group between ATP and AMP. Plays an important role in cellular energy homeostasis and in adenine nucleotide metabolism. In Methylococcus capsulatus (strain ATCC 33009 / NCIMB 11132 / Bath), this protein is Adenylate kinase.